The primary structure comprises 187 residues: GTP cyclohydrolase 1 (187 aa).

Positions 76, 79, and 148 each coordinate Zn(2+).

It belongs to the GTP cyclohydrolase I family. As to quaternary structure, homomer.

It carries out the reaction GTP + H2O = 7,8-dihydroneopterin 3'-triphosphate + formate + H(+). Its pathway is cofactor biosynthesis; 7,8-dihydroneopterin triphosphate biosynthesis; 7,8-dihydroneopterin triphosphate from GTP: step 1/1. This chain is GTP cyclohydrolase 1, found in Desulforamulus reducens (strain ATCC BAA-1160 / DSM 100696 / MI-1) (Desulfotomaculum reducens).